Here is a 400-residue protein sequence, read N- to C-terminus: CCA-adding enzyme (400 aa).

ATP-binding residues include Gly28 and Arg31. The CTP site is built by Gly28 and Arg31. Asp41 and Asp43 together coordinate Mg(2+). Residues Arg112, Asp155, Arg158, Arg161, and Arg164 each contribute to the ATP site. Residues Arg112, Asp155, Arg158, Arg161, and Arg164 each coordinate CTP.

This sequence belongs to the tRNA nucleotidyltransferase/poly(A) polymerase family. Bacterial CCA-adding enzyme type 3 subfamily. As to quaternary structure, homodimer. Requires Mg(2+) as cofactor.

The enzyme catalyses a tRNA precursor + 2 CTP + ATP = a tRNA with a 3' CCA end + 3 diphosphate. The catalysed reaction is a tRNA with a 3' CCA end + 2 CTP + ATP = a tRNA with a 3' CCACCA end + 3 diphosphate. Its function is as follows. Catalyzes the addition and repair of the essential 3'-terminal CCA sequence in tRNAs without using a nucleic acid template. Adds these three nucleotides in the order of C, C, and A to the tRNA nucleotide-73, using CTP and ATP as substrates and producing inorganic pyrophosphate. tRNA 3'-terminal CCA addition is required both for tRNA processing and repair. Also involved in tRNA surveillance by mediating tandem CCA addition to generate a CCACCA at the 3' terminus of unstable tRNAs. While stable tRNAs receive only 3'-terminal CCA, unstable tRNAs are marked with CCACCA and rapidly degraded. The polypeptide is CCA-adding enzyme (Staphylococcus haemolyticus (strain JCSC1435)).